We begin with the raw amino-acid sequence, 247 residues long: MAGHSKWANTRHRKAAQDAKRGKIFTKIIRELVTAAKLGGGDPDANPRLRAAVDKALSNNMTRDTLNRAIARGVGGDDDANMETIIYEGYGPGGTAIMVECLSDNRNRTVAEVRHAFSKCGGNLGTDGSVAYLFSKKGVISFEKGDEDTIMEAALEAGAEDVVTYDDGAIDVYTAWEEMGKVRDALENAGLKADSAEVSMIPSTKADMDAETAPKLLRLIDMLEDCDDVQEVYHNGEISDEVAATLE.

Residues 1-20 (MAGHSKWANTRHRKAAQDAK) form a disordered region.

The protein belongs to the TACO1 family.

It is found in the cytoplasm. This is Probable transcriptional regulatory protein YebC from Salmonella arizonae (strain ATCC BAA-731 / CDC346-86 / RSK2980).